Here is a 103-residue protein sequence, read N- to C-terminus: UPF0145 protein PBPRB0184 (103 aa).

This sequence belongs to the UPF0145 family.

The chain is UPF0145 protein PBPRB0184 from Photobacterium profundum (strain SS9).